The primary structure comprises 334 residues: UstYa family oxidase aprY (334 aa).

Residues 55–75 traverse the membrane as a helical segment; it reads IWILLTITNLIILGITVSMIV. Asn112 carries N-linked (GlcNAc...) asparagine glycosylation. Positions 185-189 match the HXXHC 1 motif; the sequence is HQIHC. Asn214 is a glycosylation site (N-linked (GlcNAc...) asparagine). An HXXHC 2 motif is present at residues 223 to 227; the sequence is HLGHC. The span at 306–318 shows a compositional bias: basic and acidic residues; it reads SELGEKLGKHQKQ. Residues 306 to 334 are disordered; the sequence is SELGEKLGKHQKQEGVLGQAGHQHTKRHE.

It belongs to the ustYa family.

The protein localises to the membrane. The protein operates within secondary metabolite biosynthesis. Functionally, ustYa family oxidase; part of the gene cluster that mediates the biosynthesis of the asperipin-2a, a bicyclic peptide that possesses two macrocyclic ether rings consisting of 14- and 17-membered paracyclophans. Within the pathway, aprY is responsible for the synthesis of the bicyclic structure of asperipin-2a. The pathway starts with the processing of the precursor aprA by kexin proteases to produce 11 identical copies of the hexapeptide Phe-Tyr-Tyr-Thr-Gly-Tyr. Macrocyclization of asperipin-2a may accompany an alpha-hydroxylation-dehydration sequence to give an imine, which is readily hydrolyzed to yield putative ketone intermediate. The reductase aprR may be required for the final reduction to yield asperipin-2a. In Aspergillus flavus (strain ATCC 200026 / FGSC A1120 / IAM 13836 / NRRL 3357 / JCM 12722 / SRRC 167), this protein is UstYa family oxidase aprY.